Reading from the N-terminus, the 245-residue chain is uncharacterized protein (245 aa).

Transmembrane regions (helical) follow at residues 29 to 51 (LVVL…RIGM) and 61 to 83 (TILF…LMLH).

The protein localises to the cell membrane. This is an uncharacterized protein from Treponema pallidum (strain Nichols).